A 197-amino-acid polypeptide reads, in one-letter code: Holliday junction branch migration complex subunit RuvA (197 aa).

Residues 1-64 are domain I; the sequence is MIASVRGTLI…EDALTLYGFK (64 aa). The domain II stretch occupies residues 65-145; the sequence is TVEQRQLFET…GLPVAPGVSP (81 aa). The interval 146-153 is flexible linker; that stretch reads AVAAVNAE. The segment at 153–197 is domain III; that stretch reads ELSEMLVSLGFSSAEASTAIAALPPDAPLDLEERLRLALRYFGAR.

This sequence belongs to the RuvA family. As to quaternary structure, homotetramer. Forms an RuvA(8)-RuvB(12)-Holliday junction (HJ) complex. HJ DNA is sandwiched between 2 RuvA tetramers; dsDNA enters through RuvA and exits via RuvB. An RuvB hexamer assembles on each DNA strand where it exits the tetramer. Each RuvB hexamer is contacted by two RuvA subunits (via domain III) on 2 adjacent RuvB subunits; this complex drives branch migration. In the full resolvosome a probable DNA-RuvA(4)-RuvB(12)-RuvC(2) complex forms which resolves the HJ.

The protein resides in the cytoplasm. In terms of biological role, the RuvA-RuvB-RuvC complex processes Holliday junction (HJ) DNA during genetic recombination and DNA repair, while the RuvA-RuvB complex plays an important role in the rescue of blocked DNA replication forks via replication fork reversal (RFR). RuvA specifically binds to HJ cruciform DNA, conferring on it an open structure. The RuvB hexamer acts as an ATP-dependent pump, pulling dsDNA into and through the RuvAB complex. HJ branch migration allows RuvC to scan DNA until it finds its consensus sequence, where it cleaves and resolves the cruciform DNA. This is Holliday junction branch migration complex subunit RuvA from Roseiflexus castenholzii (strain DSM 13941 / HLO8).